We begin with the raw amino-acid sequence, 516 residues long: Sodium channel protein Nach (516 aa).

Residues 1–49 are Cytoplasmic-facing; sequence MGHEEELSPEQVDLKVSPLMGSLKRTWNDFCATSSIHGLRYTRDEDTNR. Residues 50-70 form a helical membrane-spanning segment; that stretch reads IVHFVWLLISLVMFICAVVMA. The Extracellular segment spans residues 71–452; that stretch reads RTFYIDFRSN…LVSNLGSAFS (382 aa). N-linked (GlcNAc...) asparagine glycosylation is found at Asn128, Asn165, Asn220, and Asn348. A helical membrane pass occupies residues 453 to 473; sequence LFVGMSMLSVVEIMYYFSVIL. At 474–516 the chain is on the cytoplasmic side; sequence RKNYVLECEARKKMLHKGPKFAWPKANDSHSKHQKSVFIIHKM.

This sequence belongs to the amiloride-sensitive sodium channel (TC 1.A.6) family.

The protein resides in the membrane. Functionally, part of a complex that plays a role in tracheal liquid clearance. Probable role in sodium transport. The chain is Sodium channel protein Nach (Nach) from Drosophila ananassae (Fruit fly).